The chain runs to 174 residues: Small ribosomal subunit protein uS5c (174 aa).

The 64-residue stretch at Trp17–Val80 folds into the S5 DRBM domain.

Belongs to the universal ribosomal protein uS5 family. Part of the 30S ribosomal subunit. Contacts protein S4.

The protein resides in the plastid. It localises to the chloroplast. With S4 and S12 plays an important role in translational accuracy. The protein is Small ribosomal subunit protein uS5c (rps5) of Pyropia yezoensis (Susabi-nori).